We begin with the raw amino-acid sequence, 865 residues long: Outer membrane usher protein HtrE (865 aa).

The N-terminal stretch at 1 to 29 (MTIEYTKNYHHLTRIATFCALLYCNTAFS) is a signal peptide. Cys-838 and Cys-862 are oxidised to a cystine.

The protein belongs to the fimbrial export usher family.

The protein localises to the cell outer membrane. Its function is as follows. Part of the yadCKLM-htrE-yadVN fimbrial operon. Could contribute to adhesion to various surfaces in specific environmental niches. Probably involved in the export and assembly of fimbrial subunits across the outer membrane. The protein is Outer membrane usher protein HtrE (htrE) of Escherichia coli (strain K12).